Reading from the N-terminus, the 205-residue chain is Protease (205 aa).

Residues H54, D71, and C122 contribute to the active site.

The protein belongs to the peptidase C5 family. As to quaternary structure, interacts with protease cofactor pVI-C; this interaction is necessary for protease activation.

The protein resides in the virion. Its subcellular location is the host nucleus. It catalyses the reaction Cleaves proteins of the adenovirus and its host cell at two consensus sites: -Yaa-Xaa-Gly-Gly-|-Xaa- and -Yaa-Xaa-Gly-Xaa-|-Gly- (in which Yaa is Met, Ile or Leu, and Xaa is any amino acid).. Its activity is regulated as follows. Requires DNA and protease cofactor for maximal activation. Inside nascent virions, becomes partially activated by binding to the viral DNA, allowing it to cleave the cofactor that binds to the protease and fully activates it. Actin, like the viral protease cofactor, seems to act as a cofactor in the cleavage of cytokeratin 18 and of actin itself. Functionally, cleaves viral precursor proteins (pTP, pIIIa, pVI, pVII, pVIII, and pX) inside newly assembled particles giving rise to mature virions. Protease complexed to its cofactor slides along the viral DNA to specifically locate and cleave the viral precursors. Mature virions have a weakened organization compared to the unmature virions, thereby facilitating subsequent uncoating. Without maturation, the particle lacks infectivity and is unable to uncoat. Late in adenovirus infection, in the cytoplasm, may participate in the cytoskeleton destruction. Cleaves host cell cytoskeletal keratins K7 and K18. The sequence is that of Protease from Homo sapiens (Human).